The sequence spans 378 residues: Metacaspase-1B (378 aa).

The segment at 1–70 (MCSPPPYPPQ…QEAQSFGGGA (70 aa)) is disordered. Over residues 10 to 29 (QGHHYPPSPHGSYYSPTPYG) the composition is skewed to low complexity. Residues H169 and C225 contribute to the active site.

This sequence belongs to the peptidase C14B family.

In terms of biological role, involved in cell death (apoptosis). The protein is Metacaspase-1B (casB) of Aspergillus terreus (strain NIH 2624 / FGSC A1156).